The following is a 1024-amino-acid chain: Myosin phosphatase Rho-interacting protein (1024 aa).

Residues 1 to 382 (MSAAKENPCR…DRRSTESSMT (382 aa)) are interaction with F-actin. Positions 43–150 (KPIYGGWLLL…WLEMLMVYPR (108 aa)) constitute a PH 1 domain. The disordered stretch occupies residues 152-262 (NKQNQKKKRK…GDRVDGGRKV (111 aa)). Residues 179–190 (SSSGGSSGSSSS) show a composition bias toward low complexity. Residues Ser-193, Ser-219, Ser-221, Ser-225, and Ser-227 each carry the phosphoserine modification. Residues 221–233 (SPAQSPSQSQPPA) show a composition bias toward low complexity. Basic and acidic residues predominate over residues 240 to 262 (PGLESKEDESTISGDRVDGGRKV). Ser-266, Ser-270, Ser-289, and Ser-292 each carry phosphoserine. Disordered stretches follow at residues 274–301 (AKQD…SRRS) and 328–379 (PSSD…STES). At Thr-295 the chain carries Phosphothreonine. A compositionally biased stretch (basic and acidic residues) spans 333–349 (RQGRSERRAIPRKRDFA). Phosphoserine is present on Ser-364. In terms of domain architecture, PH 2 spans 386 to 482 (LNFKKGWLTK…WIQTIMKHVL (97 aa)). The disordered stretch occupies residues 486 to 583 (APDVTSSLPE…AEPGELERER (98 aa)). Over residues 488 to 508 (DVTSSLPEGKNKSTSFETCSR) the composition is skewed to polar residues. Ser-492 carries the post-translational modification Phosphoserine. Over residues 522-545 (PEQKKSRARERRREGRSKTFDWAE) the composition is skewed to basic and acidic residues. The interaction with RHOA stretch occupies residues 545–823 (EFRPIQQALA…SVQRELEVLS (279 aa)). Ser-617 is subject to Phosphoserine. Thr-645 is modified (phosphothreonine). Residues 672–976 (HELTSLLEKE…AATEALGEKS (305 aa)) adopt a coiled-coil conformation. Ser-799 bears the Phosphoserine mark. Residues 823-878 (SEQYSQKCLENAHLAQALEAERQALRQCQRENQELNAHNQELNNRLAAEITRLRTL) form an interaction with PPP1R12A region. Residues 972-995 (LGEKSPEGTTVSGYDIMKSKSNPD) are disordered. Phosphoserine occurs at positions 976, 979, 992, 1013, and 1015.

As to quaternary structure, binds RHOA, PPP1R12A/MBS and PPP1R12C/MBS85 through adjacent coiled coil domains. Interacts with MYZAP. Binds F-actin through its N-terminus. Expressed in Kidney, Brain, Heart and Lung.

It localises to the cytoplasm. Its subcellular location is the cytoskeleton. Targets myosin phosphatase to the actin cytoskeleton. Required for the regulation of the actin cytoskeleton by RhoA and ROCK1. Depletion leads to an increased number of stress fibers in smooth muscle cells through stabilization of actin fibers by phosphorylated myosin. Overexpression of MRIP as well as its F-actin-binding region leads to disassembly of stress fibers in neuronal cells. The chain is Myosin phosphatase Rho-interacting protein (Mprip) from Mus musculus (Mouse).